The primary structure comprises 628 residues: Kelch-like protein 14 (628 aa).

The region spanning 33 to 151 is the BTB domain; that stretch reads CDVTLTAQGQ…LYTANVTLSL (119 aa). A disordered region spans residues 69 to 115; the sequence is GGGVGGQDGLGAPKDQQQPPQQQPSQQQQPPPQEEPGTPSSSPDDKL. The span at 84–96 shows a compositional bias: low complexity; it reads QQQPPQQQPSQQQ. The BACK domain occupies 210 to 279; that stretch reads VEDVLLLNFE…PAPELVERVQ (70 aa). Kelch repeat units follow at residues 323 to 372, 373 to 424, 425 to 471, 473 to 518, 520 to 570, and 572 to 620; these read MLLL…EVEN, FLFV…RLDK, HLYV…VHNG, IYIS…VMND, LYAI…VLDD, and IYLV…TVIL.

In terms of assembly, interacts with TOR1A, preferentially with the ATP-free form.

The protein localises to the cytoplasm. Its subcellular location is the cytosol. The protein resides in the endoplasmic reticulum membrane. The chain is Kelch-like protein 14 (KLHL14) from Homo sapiens (Human).